The primary structure comprises 88 residues: ATP synthase subunit 9, mitochondrial (88 aa).

2 helical membrane passes run 30-50 (IGLT…ILAV) and 66-86 (LGFA…FLIL).

This sequence belongs to the ATPase C chain family. As to quaternary structure, F-type ATPases have 2 components, CF(1) - the catalytic core - and CF(0) - the membrane proton channel. CF(1) has five subunits: alpha(3), beta(3), gamma(1), delta(1), epsilon(1). CF(0) has three main subunits: a, b and c.

The protein resides in the mitochondrion membrane. Mitochondrial membrane ATP synthase (F(1)F(0) ATP synthase or Complex V) produces ATP from ADP in the presence of a proton gradient across the membrane which is generated by electron transport complexes of the respiratory chain. F-type ATPases consist of two structural domains, F(1) - containing the extramembraneous catalytic core and F(0) - containing the membrane proton channel, linked together by a central stalk and a peripheral stalk. During catalysis, ATP synthesis in the catalytic domain of F(1) is coupled via a rotary mechanism of the central stalk subunits to proton translocation. Part of the complex F(0) domain. A homomeric c-ring of probably 10 subunits is part of the complex rotary element. In Dictyostelium citrinum (Slime mold), this protein is ATP synthase subunit 9, mitochondrial (atp9).